We begin with the raw amino-acid sequence, 565 residues long: Sulfite reductase [NADPH] hemoprotein beta-component (565 aa).

[4Fe-4S] cluster-binding residues include cysteine 429, cysteine 435, cysteine 474, and cysteine 478. Siroheme is bound at residue cysteine 478.

The protein belongs to the nitrite and sulfite reductase 4Fe-4S domain family. As to quaternary structure, alpha(8)-beta(8). The alpha component is a flavoprotein, the beta component is a hemoprotein. It depends on siroheme as a cofactor. Requires [4Fe-4S] cluster as cofactor.

The enzyme catalyses hydrogen sulfide + 3 NADP(+) + 3 H2O = sulfite + 3 NADPH + 4 H(+). It functions in the pathway sulfur metabolism; hydrogen sulfide biosynthesis; hydrogen sulfide from sulfite (NADPH route): step 1/1. In terms of biological role, component of the sulfite reductase complex that catalyzes the 6-electron reduction of sulfite to sulfide. This is one of several activities required for the biosynthesis of L-cysteine from sulfate. The chain is Sulfite reductase [NADPH] hemoprotein beta-component from Pseudoalteromonas translucida (strain TAC 125).